The primary structure comprises 262 residues: Adenosylcobinamide-GDP ribazoletransferase (262 aa).

6 helical membrane-spanning segments follow: residues 43–63 (YFGLVGLLIGLLSAIVFWLTQ), 66–86 (LPAGVSVLLAMLVGVLLTGGF), 120–140 (GAIALILALLLKWQLLVELAL), 146–166 (AGSALIVAHTVSRVVAASIIF), 191–211 (LFILVASGVLVLLFLKGLAAL), and 242–262 (AAQQICEIVCYLVLLIVGSIL).

This sequence belongs to the CobS family. Mg(2+) is required as a cofactor.

It localises to the cell inner membrane. It carries out the reaction alpha-ribazole + adenosylcob(III)inamide-GDP = adenosylcob(III)alamin + GMP + H(+). It catalyses the reaction alpha-ribazole 5'-phosphate + adenosylcob(III)inamide-GDP = adenosylcob(III)alamin 5'-phosphate + GMP + H(+). It participates in cofactor biosynthesis; adenosylcobalamin biosynthesis; adenosylcobalamin from cob(II)yrinate a,c-diamide: step 7/7. Functionally, joins adenosylcobinamide-GDP and alpha-ribazole to generate adenosylcobalamin (Ado-cobalamin). Also synthesizes adenosylcobalamin 5'-phosphate from adenosylcobinamide-GDP and alpha-ribazole 5'-phosphate. The sequence is that of Adenosylcobinamide-GDP ribazoletransferase from Shewanella putrefaciens (strain CN-32 / ATCC BAA-453).